Consider the following 290-residue polypeptide: CTP-dependent diacylglycerol kinase 1 (290 aa).

The interval M1–A33 is disordered. Topologically, residues M1–K77 are lumenal. Residue N11 is glycosylated (N-linked (GlcNAc...) asparagine). Polar residues predominate over residues R23 to A33. Phosphoserine is present on residues S44, S45, and S46. Residues V78–I95 traverse the membrane as a helical segment. Residues N96–P103 are Cytoplasmic-facing. A helical transmembrane segment spans residues L104–F124. Over N125–E140 the chain is Lumenal. The chain crosses the membrane as a helical span at residues I141–F161. The Cytoplasmic portion of the chain corresponds to S162–K163. Residues D164–G184 form a helical membrane-spanning segment. Over R185–S203 the chain is Lumenal. N197 carries N-linked (GlcNAc...) asparagine glycosylation. The helical transmembrane segment at I204–A224 threads the bilayer. The Cytoplasmic segment spans residues Y225–S244. Residues L245–F265 form a helical membrane-spanning segment. The Lumenal segment spans residues N266 to K290. A glycan (N-linked (GlcNAc...) asparagine) is linked at N270.

This sequence belongs to the DGK1 family. Ca(2+) is required as a cofactor. Requires Mg(2+) as cofactor. In terms of processing, CKII-mediated phosphorylation of Ser-45 and Ser-46 regulates its function in the production of PA.

It is found in the endoplasmic reticulum membrane. The protein resides in the nucleus membrane. It carries out the reaction a 1,2-diacyl-sn-glycerol + CTP = a 1,2-diacyl-sn-glycero-3-phosphate + CDP + H(+). It catalyses the reaction 1,2-di-(9Z-octadecenoyl)-sn-glycerol + CTP = 1,2-di-(9Z-octadecenoyl)-sn-glycero-3-phosphate + CDP + H(+). With respect to regulation, inhibited by N-ethylmaleimide, dCTP, and sphingoid bases including sphinganine, sphingosine and phytosphingosine. DAG pyrophosphate, cardiolipin, CDP-DAG, and lyso-PA inhibited activity by 23-66%. Also inhibited by Ca(2+) concentrations of more than 1 mM, by addition of EDTA or EGTA at 5 mM, and by 5 mM Mn(2+) and Zn(2+). Stimulated by major membrane phospholipids including phosphatidylcholine, phosphatidylethanolamine, phosphatidylinositol, phosphatidylserine, phosphatidylglycerol, and phosphatidate. Also stimulated to a maximum by addition of TritonX-100 at a concentration of 1 mM, followed by an apparent inhibition of activity at concentrations above 1 mM. Functionally, CTP-dependent diacylglycerol kinase that catalyzes the phosphorylation of diacylglycerol (DAG) to phosphatidate (PA). Controls phosphatidate levels at the nuclear envelope. Counteracts the activity of PA phosphatase PAH1/SMP2, controlling the levels of PA and DAG for the synthesis of triacylglycerol and membrane phospholipids. May be involved in vesicle trafficking between the endoplasmic reticulum and the Golgi apparatus. Required to convert triacylglycerol-derived DAG to PA for phospholipid synthesis during growth resumption from stationary phase in the absence of de novo fatty acid synthesis. Involved in the resistance to nickel chloride and nalidixic acid. The polypeptide is CTP-dependent diacylglycerol kinase 1 (DGK1) (Saccharomyces cerevisiae (strain ATCC 204508 / S288c) (Baker's yeast)).